A 3095-amino-acid chain; its full sequence is HD protein homolog (3095 aa).

Disordered regions lie at residues 105–197, 536–561, 1312–1371, 1509–1547, and 2005–2037; these read PHQH…NGNA, QQQQQQQQQQQQQQQQHNLTSSTMSG, PPQQ…STVI, KSTSSSSSSSSTATSPSSSSSSTTTTTTTSTNTTTTTPS, and KELTNNNNNNNNNIIEKEEEEKEKEKEKVKEEE. The span at 115–139 shows a compositional bias: polar residues; that stretch reads STNLTDHLSQNSVTPSVPTTPNYQQ. 2 stretches are compositionally biased toward low complexity: residues 140–197 and 536–551; these read SPST…NGNA and QQQQQQQQQQQQQQQQ. The span at 552-561 shows a compositional bias: polar residues; the sequence is HNLTSSTMSG. Composition is skewed to low complexity over residues 1315–1368, 1510–1547, and 2008–2018; these read QQQQ…LNNS, STSSSSSSSSTATSPSSSSSSTTTTTTTSTNTTTTTPS, and TNNNNNNNNNI.

Belongs to the huntingtin family.

The protein resides in the cytoplasm. Its subcellular location is the nucleus. May play a role in microtubule-mediated transport or vesicle function. This Dictyostelium discoideum (Social amoeba) protein is HD protein homolog (htt).